The following is a 211-amino-acid chain: Small ribosomal subunit protein uS4 (211 aa).

In terms of domain architecture, S4 RNA-binding spans Arg-99–Glu-160.

This sequence belongs to the universal ribosomal protein uS4 family. As to quaternary structure, part of the 30S ribosomal subunit. Contacts protein S5. The interaction surface between S4 and S5 is involved in control of translational fidelity.

One of the primary rRNA binding proteins, it binds directly to 16S rRNA where it nucleates assembly of the body of the 30S subunit. In terms of biological role, with S5 and S12 plays an important role in translational accuracy. The chain is Small ribosomal subunit protein uS4 from Petrotoga mobilis (strain DSM 10674 / SJ95).